The primary structure comprises 472 residues: Adenosylhomocysteinase (472 aa).

The substrate site is built by T63, D138, and E198. 199–201 (TTT) contacts NAD(+). Residues K228 and D232 each contribute to the substrate site. NAD(+) contacts are provided by residues N233, 262–267 (GYGDVG), E285, N320, 341–343 (IGH), and N386.

Belongs to the adenosylhomocysteinase family. Requires NAD(+) as cofactor.

It is found in the cytoplasm. The enzyme catalyses S-adenosyl-L-homocysteine + H2O = L-homocysteine + adenosine. The protein operates within amino-acid biosynthesis; L-homocysteine biosynthesis; L-homocysteine from S-adenosyl-L-homocysteine: step 1/1. May play a key role in the regulation of the intracellular concentration of adenosylhomocysteine. In Methylococcus capsulatus (strain ATCC 33009 / NCIMB 11132 / Bath), this protein is Adenosylhomocysteinase.